Consider the following 354-residue polypeptide: MEKFKAAMLLGSVGDALGYRNVCKENSTVGMKIQEELQRSGGLDHLVLSPGEWPVSDNTIMHIATAEALTTDYWCLDDLYREMVRCYVEIVEKLPERRPDPATIEGCAQLKPNNYLLAWHTPFNEKGSGFGAATKAMCIGLRYWKPERLETLIEVSVECGRMTHNHPTGFLGSLCTALFVSFAAQGKPLVQWGRDMLRAVPLAEEYCKKTIRHTAEYQEHWFYFEAKWQFYLEERKISKDSENKAIFPDNYDAEEREKTYRKWSSEGRGGRRGHDAPMIAYDALLAAGNSWTELCHRAMFHGGESAATGTIAGCLFGLLYGLDLVPKGLHQDLEDKEKLEDLGAALYCLSTEEK.

At Ser-27 the chain carries Phosphoserine.

The protein belongs to the ADP-ribosylglycohydrolase family.

The protein resides in the cytoplasm. Its subcellular location is the myofibril. It localises to the sarcomere. Its function is as follows. Required for myofibril assembly and outgrowth of the cardiac chambers in the developing heart. Appears to be catalytically inactive, showing no activity against O-acetyl-ADP-ribose. This is Inactive ADP-ribosyltransferase ARH2 (ADPRHL1) from Pongo abelii (Sumatran orangutan).